Reading from the N-terminus, the 202-residue chain is Small ribosomal subunit protein uS5 (202 aa).

The 64-residue stretch at 50-113 folds into the S5 DRBM domain; it reads LKQELLNLNL…REAKLNITPV (64 aa).

Belongs to the universal ribosomal protein uS5 family. As to quaternary structure, part of the 30S ribosomal subunit. Contacts protein S4.

Its function is as follows. With S4 and S12 plays an important role in translational accuracy. This Pyrobaculum calidifontis (strain DSM 21063 / JCM 11548 / VA1) protein is Small ribosomal subunit protein uS5.